The primary structure comprises 66 residues: MLDPSIDSLMNKLDSKYTLVTVSARRAREMQMNKDAQIENPKSHKFVGKALEEIDAGLLTFEKENR.

The protein belongs to the RNA polymerase subunit omega family. In terms of assembly, the RNAP catalytic core consists of 2 alpha, 1 beta, 1 beta' and 1 omega subunit. When a sigma factor is associated with the core the holoenzyme is formed, which can initiate transcription.

It carries out the reaction RNA(n) + a ribonucleoside 5'-triphosphate = RNA(n+1) + diphosphate. In terms of biological role, promotes RNA polymerase assembly. Latches the N- and C-terminal regions of the beta' subunit thereby facilitating its interaction with the beta and alpha subunits. In Bacillus licheniformis (strain ATCC 14580 / DSM 13 / JCM 2505 / CCUG 7422 / NBRC 12200 / NCIMB 9375 / NCTC 10341 / NRRL NRS-1264 / Gibson 46), this protein is DNA-directed RNA polymerase subunit omega.